Reading from the N-terminus, the 1171-residue chain is Pyruvate-flavodoxin oxidoreductase (1171 aa).

2 4Fe-4S ferredoxin-type domains span residues Glu682–Leu711 and Tyr736–Leu767. [4Fe-4S] cluster contacts are provided by Cys691, Cys694, Cys697, Cys701, Cys745, Cys748, Cys751, Cys755, Cys811, Cys814, Cys839, and Cys1072.

Belongs to the pyruvate:ferredoxin/flavodoxin oxidoreductase family. It depends on [4Fe-4S] cluster as a cofactor.

The catalysed reaction is oxidized [flavodoxin] + pyruvate + CoA + 2 H(+) = reduced [flavodoxin] + acetyl-CoA + CO2. Functionally, oxidoreductase required for the transfer of electrons from pyruvate to flavodoxin, which reduces nitrogenase. This Klebsiella pneumoniae protein is Pyruvate-flavodoxin oxidoreductase (nifJ).